Reading from the N-terminus, the 401-residue chain is Nicotinate phosphoribosyltransferase (401 aa).

At histidine 224 the chain carries Phosphohistidine; by autocatalysis.

It belongs to the NAPRTase family. Post-translationally, transiently phosphorylated on a His residue during the reaction cycle. Phosphorylation strongly increases the affinity for substrates and increases the rate of nicotinate D-ribonucleotide production. Dephosphorylation regenerates the low-affinity form of the enzyme, leading to product release.

It carries out the reaction nicotinate + 5-phospho-alpha-D-ribose 1-diphosphate + ATP + H2O = nicotinate beta-D-ribonucleotide + ADP + phosphate + diphosphate. Its pathway is cofactor biosynthesis; NAD(+) biosynthesis; nicotinate D-ribonucleotide from nicotinate: step 1/1. Functionally, catalyzes the synthesis of beta-nicotinate D-ribonucleotide from nicotinate and 5-phospho-D-ribose 1-phosphate at the expense of ATP. This chain is Nicotinate phosphoribosyltransferase, found in Pseudomonas putida (strain ATCC 47054 / DSM 6125 / CFBP 8728 / NCIMB 11950 / KT2440).